Here is a 141-residue protein sequence, read N- to C-terminus: Mitochondrial import inner membrane translocase subunit tim16 (141 aa).

A J-like region spans residues 59–117 (EACKILNVNKPADGTAANMEEVMERFKRLFDANDPEKGGSFYLQSKVVRARERLEAEIK). The segment at 119–141 (KMEEKQAEEEVKEGWNPKIYKDR) is disordered.

This sequence belongs to the TIM16/PAM16 family. In terms of assembly, heterodimer with tim14/pam18. Component of the PAM complex, at least composed of hsp70-5/ssc1, grpe/mge1, tim44, un-4/pam16, pam17 and tim14/pam18.

It localises to the mitochondrion inner membrane. Functionally, essential component of the PAM complex, a complex required for the translocation of transit peptide-containing proteins from the inner membrane into the mitochondrial matrix in an ATP-dependent manner. In the complex, it is required to regulate activity of mtHSP70 (hsp70-5) via its interaction with tim14/pam18. May act by positioning tim14/pam18 in juxtaposition to mtHSP70 at the translocon to maximize ATPase stimulation. The polypeptide is Mitochondrial import inner membrane translocase subunit tim16 (un-4) (Neurospora crassa (strain ATCC 24698 / 74-OR23-1A / CBS 708.71 / DSM 1257 / FGSC 987)).